The chain runs to 472 residues: MVCLAFIRAAHEHLYLVRKVSHVCRCHQHRAWGSRPAASQFAVQGAPGRVLELLGKSYPQDDHTNLTQKVLSKVGRNLHNQKFHPLWLIKERVKEHFYQQYMGRSRTPLFSVYDQLSPVVTTWQNFDSLLIPADHPSRKKGDNYYLNRGHMLRAHTSAHQWDLLHAGLNAFLVVGDVYRRDQIDSQHYPVFHQLEGVRLFSKHELFAGVKDGESLQLFEESSRSAHKQETHTMEAVKLVEFDLKQVLTRLVTHLFGDGLEVRWVDCYFPFTHPSFEMEINFRGEWLEVLGCGVMEQQLVNSAGAQDRIGWAFGLGLERLAMVLYDIPDIRLFWSEDERFLKQFRLSDINQSVKFQRWFFQEERATGIQRKMGRQLCPFSKYPAVFNDISFWLPSENYTENDFYDIVRTVGGDLVEKVDLIDKFEHPKTHRTSHCYRITYRHMERTLSQREVSSVHQAVQEAAVQLLGVEGRF.

Substrate-binding positions include 157-160, R179, 186-188, and 193-195; these read SAHQ, QHY, and QLE. K202 bears the N6-acetyllysine mark. Residues E287 and F312 each contribute to the substrate site. One can recognise an FDX-ACB domain in the interval 379–471; that stretch reads SKYPAVFNDI…AVQLLGVEGR (93 aa).

This sequence belongs to the class-II aminoacyl-tRNA synthetase family. In terms of assembly, monomer. In terms of tissue distribution, mainly expressed in the Purkinje cell of cerebellum.

It is found in the mitochondrion matrix. Its subcellular location is the mitochondrion. It catalyses the reaction tRNA(Phe) + L-phenylalanine + ATP = L-phenylalanyl-tRNA(Phe) + AMP + diphosphate + H(+). Its function is as follows. Is responsible for the charging of tRNA(Phe) with phenylalanine in mitochondrial translation. To a lesser extent, also catalyzes direct attachment of m-Tyr (an oxidized version of Phe) to tRNA(Phe), thereby opening the way for delivery of the misacylated tRNA to the ribosome and incorporation of ROS-damaged amino acid into proteins. In Rattus norvegicus (Rat), this protein is Phenylalanine--tRNA ligase, mitochondrial (Fars2).